Reading from the N-terminus, the 105-residue chain is Large ribosomal subunit protein uL24 (105 aa).

It belongs to the universal ribosomal protein uL24 family. In terms of assembly, part of the 50S ribosomal subunit.

In terms of biological role, one of two assembly initiator proteins, it binds directly to the 5'-end of the 23S rRNA, where it nucleates assembly of the 50S subunit. Functionally, one of the proteins that surrounds the polypeptide exit tunnel on the outside of the subunit. The chain is Large ribosomal subunit protein uL24 from Clostridium botulinum (strain Langeland / NCTC 10281 / Type F).